Consider the following 121-residue polypeptide: Large ribosomal subunit protein bL19 (121 aa).

Belongs to the bacterial ribosomal protein bL19 family.

In terms of biological role, this protein is located at the 30S-50S ribosomal subunit interface and may play a role in the structure and function of the aminoacyl-tRNA binding site. The chain is Large ribosomal subunit protein bL19 from Symbiobacterium thermophilum (strain DSM 24528 / JCM 14929 / IAM 14863 / T).